Here is a 371-residue protein sequence, read N- to C-terminus: Aminomethyltransferase (371 aa).

This sequence belongs to the GcvT family. As to quaternary structure, the glycine cleavage system is composed of four proteins: P, T, L and H.

It catalyses the reaction N(6)-[(R)-S(8)-aminomethyldihydrolipoyl]-L-lysyl-[protein] + (6S)-5,6,7,8-tetrahydrofolate = N(6)-[(R)-dihydrolipoyl]-L-lysyl-[protein] + (6R)-5,10-methylene-5,6,7,8-tetrahydrofolate + NH4(+). Its function is as follows. The glycine cleavage system catalyzes the degradation of glycine. This Pectobacterium carotovorum subsp. carotovorum (strain PC1) protein is Aminomethyltransferase.